The chain runs to 394 residues: Probable fatty acyl-CoA transferase Rv3272 (394 aa).

Asp175 serves as the catalytic Nucleophile.

Belongs to the CoA-transferase III family. In terms of assembly, homodimer.

Functionally, probably involved in fatty acid metabolism. Binds to fatty acyl-CoAs of varying carbon chain lengths, with the highest binding affinity for palmitoyl-CoA (C16:0). In vitro, alters the cell wall lipid profile and protects mycobacteria from acidic, oxidative and antibiotic stress. May play a significant role in host-pathogen interaction. This chain is Probable fatty acyl-CoA transferase Rv3272, found in Mycobacterium tuberculosis (strain ATCC 25618 / H37Rv).